A 219-amino-acid polypeptide reads, in one-letter code: uncharacterized protein (219 aa).

Composition is skewed to basic and acidic residues over residues 1-20 (METP…ESLR), 30-39 (AGRELVELRV), and 156-170 (QEVR…ELQR). The segment at 1–195 (METPIEREIR…PSLTASRGDG (195 aa)) is disordered.

It belongs to the MISP family.

This is an uncharacterized protein from Homo sapiens (Human).